The primary structure comprises 387 residues: L-aspartate:5-guanidino-3-methyl-2-oxopentanoate transaminase (387 aa).

N6-(pyridoxal phosphate)lysine is present on lysine 237.

The protein belongs to the class-I pyridoxal-phosphate-dependent aminotransferase family. It depends on pyridoxal 5'-phosphate as a cofactor.

The catalysed reaction is (3R)-5-guanidino-3-methyl-2-oxopentanoate + L-aspartate = (3R)-3-methyl-L-arginine + oxaloacetate. It participates in antibiotic biosynthesis. In terms of biological role, aminotransferase involved in the formation of the rare amino acid 3-methylarginine (MeArg), which is used as a potent antibiotic against the closely related soybean pathogen P.syringae pv. glycinea. Probably catalyzes transamination from the donor L-aspartate to 5-guanidino-3-methyl-2-oxopentanoic acid, generating 3-methylarginine. This chain is L-aspartate:5-guanidino-3-methyl-2-oxopentanoate transaminase, found in Pseudomonas syringae pv. syringae.